Reading from the N-terminus, the 89-residue chain is Cornifin-A (89 aa).

The disordered stretch occupies residues 1 to 29 (MNSQQQKQPCTPPPQPQQQQVKQPCQPPP). Repeat copies occupy residues 3 to 14 (SQQQKQPCTPPP), 18 to 29 (QQQVKQPCQPPP), 31 to 38 (EPCIPKTK), 39 to 46 (EPCHPKVP), 47 to 54 (EPCHPKVP), 55 to 62 (EPCQPKVP), 63 to 70 (EPCQPKVP), and 71 to 78 (EPCPSTVT). A 2 X 12 AA approximate repeats region spans residues 3 to 29 (SQQQKQPCTPPPQPQQQQVKQPCQPPP). Positions 31–78 (EPCIPKTKEPCHPKVPEPCHPKVPEPCQPKVPEPCQPKVPEPCPSTVT) are 6 X 8 AA approximate tandem repeats. The tract at residues 68-89 (KVPEPCPSTVTPAPAQQKTKQK) is disordered. Residues 75–89 (STVTPAPAQQKTKQK) show a composition bias toward polar residues.

It belongs to the cornifin (SPRR) family.

Its subcellular location is the cytoplasm. Its function is as follows. Cross-linked envelope protein of keratinocytes. It is a keratinocyte protein that first appears in the cell cytosol, but ultimately becomes cross-linked to membrane proteins by transglutaminase. All that results in the formation of an insoluble envelope beneath the plasma membrane. The protein is Cornifin-A (SPRR1A) of Homo sapiens (Human).